The sequence spans 784 residues: Protein DBF4 homolog B (784 aa).

The BRCT domain occupies 27-117 (CREITFAGKS…SRGKQLLKKV (91 aa)). The tract at residues 222 to 243 (TVKKKDPGDQEEEEGQRSQKPQ) is disordered. The segment at 244-293 (ARKRKGYCECCEETFDTLSEHLVGEHHFRFVSNPLSYKMIDDLAAQLTCD) adopts a DBF4-type zinc-finger fold. Zn(2+) is bound by residues cysteine 251, cysteine 254, histidine 264, and histidine 270. 3 disordered regions span residues 299–332 (FGSP…GNEG), 348–368 (HADC…AEEP), and 495–529 (TVGS…AQPA). Positions 498-507 (SQGDVTSHSA) are enriched in polar residues.

Forms a complex with cdc7. Phosphorylated. Stably phosphorylated throughout the cell cycle.

The protein resides in the nucleus. Functionally, regulatory subunit for cdc7 which activates its kinase activity thereby playing a central role in DNA replication and cell proliferation. Specifically required during the initiation of DNA replication in egg and during early embryonic development. The complex cdc7-dbf4b phosphorylates mcm2 and mcm4 subunits and is required for cdc45 loading. The polypeptide is Protein DBF4 homolog B (dbf4b) (Xenopus laevis (African clawed frog)).